We begin with the raw amino-acid sequence, 147 residues long: MGLRPQLAAILLCLLACTGNWTLGCHHGALKEIIHILNQVTEKGTPCTEMVVPDALSARKNSTEKDLICRASQGFRKFYFQHEVTLCLKNNSRVLKDLKKLYRGISSLFPQKSCNVNESTYTTLKDFLESLRRIMQKKYWQCGSSTF.

A signal peptide spans 1 to 19 (MGLRPQLAAILLCLLACTG). Residues asparagine 20, asparagine 61, asparagine 90, and asparagine 117 are each glycosylated (N-linked (GlcNAc...) asparagine). 2 disulfides stabilise this stretch: cysteine 47–cysteine 87 and cysteine 69–cysteine 114.

The protein belongs to the IL-4/IL-13 family.

The protein resides in the secreted. Its function is as follows. Participates in at least several B-cell activation processes as well as of other cell types. It is a costimulator of DNA-synthesis. It induces the expression of class II MHC molecules on resting B-cells. It enhances both secretion and cell surface expression of IgE and IgG1. It also regulates the expression of the low affinity Fc receptor for IgE (CD23) on both lymphocytes and monocytes. Positively regulates IL31RA expression in macrophages. Stimulates autophagy in dendritic cells by interfering with mTORC1 signaling and through the induction of RUFY4. The protein is Interleukin-4 (IL4) of Mesocricetus auratus (Golden hamster).